A 124-amino-acid polypeptide reads, in one-letter code: Large ribosomal subunit protein bL12 (124 aa).

It belongs to the bacterial ribosomal protein bL12 family. Homodimer. Part of the ribosomal stalk of the 50S ribosomal subunit. Forms a multimeric L10(L12)X complex, where L10 forms an elongated spine to which 2 to 4 L12 dimers bind in a sequential fashion. Binds GTP-bound translation factors.

Forms part of the ribosomal stalk which helps the ribosome interact with GTP-bound translation factors. Is thus essential for accurate translation. The chain is Large ribosomal subunit protein bL12 from Cupriavidus taiwanensis (strain DSM 17343 / BCRC 17206 / CCUG 44338 / CIP 107171 / LMG 19424 / R1) (Ralstonia taiwanensis (strain LMG 19424)).